A 601-amino-acid chain; its full sequence is Elongation factor 4 (601 aa).

In terms of domain architecture, tr-type G spans 7–189 (RNIRNFSIIA…AIVHRIPPPK (183 aa)). GTP contacts are provided by residues 19–24 (DHGKST) and 136–139 (NKID).

This sequence belongs to the TRAFAC class translation factor GTPase superfamily. Classic translation factor GTPase family. LepA subfamily.

It is found in the cell inner membrane. The enzyme catalyses GTP + H2O = GDP + phosphate + H(+). Functionally, required for accurate and efficient protein synthesis under certain stress conditions. May act as a fidelity factor of the translation reaction, by catalyzing a one-codon backward translocation of tRNAs on improperly translocated ribosomes. Back-translocation proceeds from a post-translocation (POST) complex to a pre-translocation (PRE) complex, thus giving elongation factor G a second chance to translocate the tRNAs correctly. Binds to ribosomes in a GTP-dependent manner. The protein is Elongation factor 4 of Xanthomonas axonopodis pv. citri (strain 306).